The primary structure comprises 201 residues: MIAIIDYGAGNIKSLQFALDKLNKHSIVTTEAAEIKQADSIILPGVGAFKDAMEAIRQLQLDSVIQEEAQKGKPILGICLGMQLFYEQSLENGDWEGLGLLKGSIKRISGEVKVPHMGWNTLDIQQASPLFDSKLENPYVYFVHSYAVSSFEENTLLASSQYGQLIPAIVQKGNITGMQFHPEKSGEFGIELLKRYEEMIR.

The Glutamine amidotransferase type-1 domain occupies 1 to 201 (MIAIIDYGAG…LLKRYEEMIR (201 aa)). The Nucleophile role is filled by Cys79. Active-site residues include His181 and Glu183.

Heterodimer of HisH and HisF.

It is found in the cytoplasm. The catalysed reaction is 5-[(5-phospho-1-deoxy-D-ribulos-1-ylimino)methylamino]-1-(5-phospho-beta-D-ribosyl)imidazole-4-carboxamide + L-glutamine = D-erythro-1-(imidazol-4-yl)glycerol 3-phosphate + 5-amino-1-(5-phospho-beta-D-ribosyl)imidazole-4-carboxamide + L-glutamate + H(+). The enzyme catalyses L-glutamine + H2O = L-glutamate + NH4(+). The protein operates within amino-acid biosynthesis; L-histidine biosynthesis; L-histidine from 5-phospho-alpha-D-ribose 1-diphosphate: step 5/9. Its function is as follows. IGPS catalyzes the conversion of PRFAR and glutamine to IGP, AICAR and glutamate. The HisH subunit catalyzes the hydrolysis of glutamine to glutamate and ammonia as part of the synthesis of IGP and AICAR. The resulting ammonia molecule is channeled to the active site of HisF. The sequence is that of Imidazole glycerol phosphate synthase subunit HisH from Oceanobacillus iheyensis (strain DSM 14371 / CIP 107618 / JCM 11309 / KCTC 3954 / HTE831).